We begin with the raw amino-acid sequence, 947 residues long: Receptor-like protein 56 (947 aa).

An N-terminal signal peptide occupies residues 1–27; the sequence is MEGKVFSGQKLILVMLLLGHLHGFSSC. At 28–899 the chain is on the extracellular side; that stretch reads IEKERKALLE…EDDKEVAIDM (872 aa). Residues N60, N75, and N98 are each glycosylated (N-linked (GlcNAc...) asparagine). LRR repeat units follow at residues 105 to 128, 134 to 157, 159 to 182, 183 to 207, 209 to 232, 233 to 257, 259 to 281, 282 to 305, and 307 to 330; these read FEEVRSLDLSNSRLNGLVDDVEGY, LRNLQILNFSSNEFNNSIFPFLNA, TSLTTLSLRRNNMYGPIPLKELKN, LTNLELLDLSGNRIDGSMPVREFPY, KKLKALDLSSNGIYSSMEWQGLKN, LTNLEVLSLGYNYFDGPIPIEVFCE, KNLQELDLRGINFVGQLPLCFGN, LNKLRFLDLSSNQLTGNIPPSFSS, and ESLEYLSLSDNSFEGFFSLNPLTN. N-linked (GlcNAc...) asparagine glycosylation is found at N141, N148, and N182. The N-linked (GlcNAc...) asparagine glycan is linked to N232. An N-linked (GlcNAc...) asparagine glycan is attached at N330. The LRR 10; degenerate repeat unit spans residues 332–356; it reads TKLKVFIFSSKDDMVQVKIESTWQP. 18 LRR repeats span residues 357-380, 381-404, 405-427, 428-450, 452-476, 477-500, 502-527, 529-549, 550-575, 577-598, 600-616, 617-640, 642-663, 664-686, 757-780, 781-804, 805-829, and 831-854; these read LFQLSVLVLRLCSLEKIPNFLMYQ, KNLHVVDLSGNRISGIIPTWLLEN, NPELEVLQLKNNSFTIFQMPTSV, HNLQVLDFSENNIGGLFPDNFGR, LPNLVHMNGSNNGFQGNFPSSMGEM, YNISFLDLSYNNLSGELPQSFVSS, FSLSILQLSHNKFSGHFLPRQTNFTS, IVLRINNNLFTGKIGVGLLTL, VDLCILDMSNNFLEGELPPLLLVFEY, NFLDLSGNLLSGALPSHVSLDN, LFLHNNNFTGPIPDTFL, GSIQILDLRNNKLSGNIPQFVDTQ, ISFLLLRGNSLTGYIPSTLCEF, SKMRLLDLSDNKLNGFIPSCFNN, LNSMYGLDLSSNELSGVIPAELGD, LFKLRALNLSHNFLSSHIPDSFSK, LQDIESLDLSYNMLQGSIPHQLTNL, and SLAIFNVSYNNLSGIIPQGKQFNT. An N-linked (GlcNAc...) asparagine glycan is attached at N415. Residues N459, N478, N488, and N524 are each glycosylated (N-linked (GlcNAc...) asparagine). N-linked (GlcNAc...) asparagine glycosylation is present at N606. N-linked (GlcNAc...) asparagine glycosylation is present at N686. 4 N-linked (GlcNAc...) asparagine glycosylation sites follow: N788, N828, N836, and N841. A helical transmembrane segment spans residues 900–920; sequence LVFYWSTAGTYVTALIGILVL. The Cytoplasmic portion of the chain corresponds to 921–947; that stretch reads MCVDCSWRRAWLRLVDAFIASAKSKLA.

It belongs to the RLP family.

It localises to the cell membrane. The sequence is that of Receptor-like protein 56 from Arabidopsis thaliana (Mouse-ear cress).